The primary structure comprises 401 residues: ATP phosphoribosyltransferase regulatory subunit (401 aa).

It belongs to the class-II aminoacyl-tRNA synthetase family. HisZ subfamily. As to quaternary structure, heteromultimer composed of HisG and HisZ subunits.

Its subcellular location is the cytoplasm. It functions in the pathway amino-acid biosynthesis; L-histidine biosynthesis; L-histidine from 5-phospho-alpha-D-ribose 1-diphosphate: step 1/9. Functionally, required for the first step of histidine biosynthesis. May allow the feedback regulation of ATP phosphoribosyltransferase activity by histidine. The sequence is that of ATP phosphoribosyltransferase regulatory subunit from Desulforamulus reducens (strain ATCC BAA-1160 / DSM 100696 / MI-1) (Desulfotomaculum reducens).